The sequence spans 383 residues: ATP phosphoribosyltransferase regulatory subunit (383 aa).

Belongs to the class-II aminoacyl-tRNA synthetase family. HisZ subfamily. In terms of assembly, heteromultimer composed of HisG and HisZ subunits.

It is found in the cytoplasm. It functions in the pathway amino-acid biosynthesis; L-histidine biosynthesis; L-histidine from 5-phospho-alpha-D-ribose 1-diphosphate: step 1/9. In terms of biological role, required for the first step of histidine biosynthesis. May allow the feedback regulation of ATP phosphoribosyltransferase activity by histidine. The protein is ATP phosphoribosyltransferase regulatory subunit of Lactiplantibacillus plantarum (strain ATCC BAA-793 / NCIMB 8826 / WCFS1) (Lactobacillus plantarum).